A 433-amino-acid chain; its full sequence is Adenylosuccinate synthetase (433 aa).

GTP-binding positions include 18 to 24 (GDEGKGK) and 46 to 48 (GHT). The active-site Proton acceptor is Asp19. The Mg(2+) site is built by Asp19 and Gly46. Residues 19 to 22 (DEGK), 44 to 47 (NAGH), Thr136, Arg150, Gln229, Thr244, and Arg308 each bind IMP. His47 (proton donor) is an active-site residue. 304-310 (VTTKRMR) is a binding site for substrate. GTP is bound by residues Arg310, 336 to 338 (KID), and 420 to 422 (GTG).

Belongs to the adenylosuccinate synthetase family. Homodimer. Requires Mg(2+) as cofactor.

The protein localises to the cytoplasm. It catalyses the reaction IMP + L-aspartate + GTP = N(6)-(1,2-dicarboxyethyl)-AMP + GDP + phosphate + 2 H(+). The protein operates within purine metabolism; AMP biosynthesis via de novo pathway; AMP from IMP: step 1/2. Its function is as follows. Plays an important role in the de novo pathway and in the salvage pathway of purine nucleotide biosynthesis. Catalyzes the first committed step in the biosynthesis of AMP from IMP. The chain is Adenylosuccinate synthetase from Schistosoma japonicum (Blood fluke).